A 240-amino-acid polypeptide reads, in one-letter code: Octanoyltransferase (240 aa).

The BPL/LPL catalytic domain maps to 49–233 (HQAEELVWLL…AFESVFGATR (185 aa)). Substrate-binding positions include 87-94 (RGGQVTYH), 162-164 (AIG), and 175-177 (GIA). Catalysis depends on Cys193, which acts as the Acyl-thioester intermediate.

This sequence belongs to the LipB family.

It localises to the cytoplasm. It carries out the reaction octanoyl-[ACP] + L-lysyl-[protein] = N(6)-octanoyl-L-lysyl-[protein] + holo-[ACP] + H(+). It functions in the pathway protein modification; protein lipoylation via endogenous pathway; protein N(6)-(lipoyl)lysine from octanoyl-[acyl-carrier-protein]: step 1/2. Catalyzes the transfer of endogenously produced octanoic acid from octanoyl-acyl-carrier-protein onto the lipoyl domains of lipoate-dependent enzymes. Lipoyl-ACP can also act as a substrate although octanoyl-ACP is likely to be the physiological substrate. The chain is Octanoyltransferase from Bradyrhizobium sp. (strain ORS 278).